A 352-amino-acid polypeptide reads, in one-letter code: Heat-inducible transcription repressor HrcA (352 aa).

The protein belongs to the HrcA family.

In terms of biological role, negative regulator of class I heat shock genes (grpE-dnaK-dnaJ and groELS operons). Prevents heat-shock induction of these operons. The chain is Heat-inducible transcription repressor HrcA from Latilactobacillus sakei (Lactobacillus sakei).